The chain runs to 339 residues: Dehydrogenase/reductase SDR family member 7 (339 aa).

The first 28 residues, 1 to 28, serve as a signal peptide directing secretion; it reads MNWELLLWLLVLCALLLLLVQLLRFLRA. Positions 60 and 62 each coordinate NAD(+). S190 contributes to the substrate binding site. The NAD(+) site is built by Y203, K207, and S239. Y203 functions as the Proton acceptor in the catalytic mechanism.

This sequence belongs to the short-chain dehydrogenases/reductases (SDR) family. Found predominantly in the adrenal glands, liver, thyroid, prostate, small intestine, colon, stomach, kidney and brain. Lower levels observed in skeletal muscle, the lung and the spleen.

Its subcellular location is the endoplasmic reticulum membrane. The catalysed reaction is all-trans-retinol + NADP(+) = all-trans-retinal + NADPH + H(+). The enzyme catalyses 5alpha-androstane-3alpha,17beta-diol + NADP(+) = 17beta-hydroxy-5alpha-androstan-3-one + NADPH + H(+). Functionally, NADPH-dependent oxidoreductase which catalyzes the reduction of a variety of compounds bearing carbonyl groups including steroids, retinoids and xenobiotics. Catalyzes the reduction/inactivation of 5alpha-dihydrotestosterone to 3alpha-androstanediol, with a possible role in the modulation of androgen receptor function. Involved in the reduction of all-trans-retinal to all-trans-retinol. Converts cortisone to 20beta-dihydrocortisone in vitro, although the physiological relevance of this activity is questionable. Reduces exogenous compounds such as quinones (1,2-naphtoquinone, 9,10-phenantrenequinone and benzoquinone) and other xenobiotics (alpha-diketones) in vitro, suggesting a role in the biotransformation of xenobiotics with carbonyl group. A dehydrogenase activity has not been detected so far. May play a role as tumor suppressor. The sequence is that of Dehydrogenase/reductase SDR family member 7 from Homo sapiens (Human).